The following is a 1413-amino-acid chain: DNA-directed RNA polymerase subunit beta' (1413 aa).

Zn(2+)-binding residues include Cys70, Cys72, Cys85, and Cys88. Mg(2+) is bound by residues Asp461, Asp463, and Asp465. Zn(2+) is bound by residues Cys820, Cys894, Cys901, and Cys904.

This sequence belongs to the RNA polymerase beta' chain family. As to quaternary structure, the RNAP catalytic core consists of 2 alpha, 1 beta, 1 beta' and 1 omega subunit. When a sigma factor is associated with the core the holoenzyme is formed, which can initiate transcription. It depends on Mg(2+) as a cofactor. Zn(2+) serves as cofactor.

The catalysed reaction is RNA(n) + a ribonucleoside 5'-triphosphate = RNA(n+1) + diphosphate. Functionally, DNA-dependent RNA polymerase catalyzes the transcription of DNA into RNA using the four ribonucleoside triphosphates as substrates. The polypeptide is DNA-directed RNA polymerase subunit beta' (Cupriavidus metallidurans (strain ATCC 43123 / DSM 2839 / NBRC 102507 / CH34) (Ralstonia metallidurans)).